Reading from the N-terminus, the 340-residue chain is Tetraacyldisaccharide 4'-kinase (340 aa).

47–54 (SVGGTGKT) contributes to the ATP binding site.

It belongs to the LpxK family.

The catalysed reaction is a lipid A disaccharide + ATP = a lipid IVA + ADP + H(+). Its pathway is glycolipid biosynthesis; lipid IV(A) biosynthesis; lipid IV(A) from (3R)-3-hydroxytetradecanoyl-[acyl-carrier-protein] and UDP-N-acetyl-alpha-D-glucosamine: step 6/6. In terms of biological role, transfers the gamma-phosphate of ATP to the 4'-position of a tetraacyldisaccharide 1-phosphate intermediate (termed DS-1-P) to form tetraacyldisaccharide 1,4'-bis-phosphate (lipid IVA). In Flavobacterium johnsoniae (strain ATCC 17061 / DSM 2064 / JCM 8514 / BCRC 14874 / CCUG 350202 / NBRC 14942 / NCIMB 11054 / UW101) (Cytophaga johnsonae), this protein is Tetraacyldisaccharide 4'-kinase.